The chain runs to 380 residues: Kappa-type opioid receptor (380 aa).

Topologically, residues 1–57 (MGRRRQGPAQPASELPARNACLLPNGSAWLPGWAEPDGNGSAGPQDEQLEPAHISPA) are extracellular. N-linked (GlcNAc...) asparagine glycosylation is found at Asn-25 and Asn-39. The helical transmembrane segment at 58-85 (IPVIITAVYSVVFVVGLVGNSLVMFVII) threads the bilayer. Topologically, residues 86–95 (RYTKMKTATN) are cytoplasmic. Residues 96 to 119 (IYIFNLALADALVTTTMPFQSTVY) form a helical membrane-spanning segment. At 120 to 132 (LMNSWPFGDVLCK) the chain is on the extracellular side. An intrachain disulfide couples Cys-131 to Cys-210. The helical transmembrane segment at 133–154 (IVISIDYYNMFTSIFTLTMMSV) threads the bilayer. The Cytoplasmic segment spans residues 155–173 (DRYIAVCHPVKALDFRTPL). Residues 174-196 (KAKIINICIWLLSSSVGISAIIL) form a helical membrane-spanning segment. Over 197–222 (GGTKVREDVDIIECSLQFPDDDYSWW) the chain is Extracellular. A helical transmembrane segment spans residues 223–247 (DLFMKICVFVFAFVIPVLIIIVCYT). The Cytoplasmic segment spans residues 248–274 (LMILRLKSVRLLSGSREKDRNLRRITR). The helical transmembrane segment at 275-296 (LVLVVVAVFIICWTPIHIFILV) threads the bilayer. Residues 297–311 (EALGSTSHSTAALSS) lie on the Extracellular side of the membrane. A helical membrane pass occupies residues 312–333 (YYFCIALGYTNSSLNPILYAFL). The Cytoplasmic segment spans residues 334–380 (DENFKRCFRDFCFPIKMRMERQSTSRVRNTVQDPAYMRNVDGVNKPV). Cys-345 carries S-palmitoyl cysteine lipidation.

This sequence belongs to the G-protein coupled receptor 1 family. Interacts with NHERF1. Interacts with GABARAPL1.

The protein localises to the cell membrane. Functionally, G-protein coupled opioid receptor that functions as a receptor for endogenous alpha-neoendorphins and dynorphins, but has low affinity for beta-endorphins. Also functions as a receptor for various synthetic opioids and for the psychoactive diterpene salvinorin A. Ligand binding causes a conformation change that triggers signaling via guanine nucleotide-binding proteins (G proteins) and modulates the activity of down-stream effectors, such as adenylate cyclase. Signaling leads to the inhibition of adenylate cyclase activity. Inhibits neurotransmitter release by reducing calcium ion currents and increasing potassium ion conductance. Plays a role in the perception of pain. Plays a role in mediating reduced physical activity upon treatment with synthetic opioids. Plays a role in the regulation of salivation in response to synthetic opioids. May play a role in arousal and regulation of autonomic and neuroendocrine functions. The polypeptide is Kappa-type opioid receptor (OPRK1) (Cavia porcellus (Guinea pig)).